We begin with the raw amino-acid sequence, 238 residues long: Pyridoxine 5'-phosphate synthase (238 aa).

Asn-6 is a 3-amino-2-oxopropyl phosphate binding site. 8 to 9 serves as a coordination point for 1-deoxy-D-xylulose 5-phosphate; the sequence is DH. A 3-amino-2-oxopropyl phosphate-binding site is contributed by Arg-17. His-42 acts as the Proton acceptor in catalysis. 1-deoxy-D-xylulose 5-phosphate contacts are provided by Arg-44 and His-49. The active-site Proton acceptor is the Glu-69. Thr-99 lines the 1-deoxy-D-xylulose 5-phosphate pocket. His-190 functions as the Proton donor in the catalytic mechanism. 3-amino-2-oxopropyl phosphate is bound by residues Gly-191 and 212–213; that span reads GH.

The protein belongs to the PNP synthase family. As to quaternary structure, homooctamer; tetramer of dimers.

The protein localises to the cytoplasm. The catalysed reaction is 3-amino-2-oxopropyl phosphate + 1-deoxy-D-xylulose 5-phosphate = pyridoxine 5'-phosphate + phosphate + 2 H2O + H(+). It participates in cofactor biosynthesis; pyridoxine 5'-phosphate biosynthesis; pyridoxine 5'-phosphate from D-erythrose 4-phosphate: step 5/5. In terms of biological role, catalyzes the complicated ring closure reaction between the two acyclic compounds 1-deoxy-D-xylulose-5-phosphate (DXP) and 3-amino-2-oxopropyl phosphate (1-amino-acetone-3-phosphate or AAP) to form pyridoxine 5'-phosphate (PNP) and inorganic phosphate. In Chlorobium phaeobacteroides (strain BS1), this protein is Pyridoxine 5'-phosphate synthase.